A 181-amino-acid polypeptide reads, in one-letter code: Protein GrpE (181 aa).

The protein belongs to the GrpE family. As to quaternary structure, homodimer.

The protein resides in the cytoplasm. Participates actively in the response to hyperosmotic and heat shock by preventing the aggregation of stress-denatured proteins, in association with DnaK and GrpE. It is the nucleotide exchange factor for DnaK and may function as a thermosensor. Unfolded proteins bind initially to DnaJ; upon interaction with the DnaJ-bound protein, DnaK hydrolyzes its bound ATP, resulting in the formation of a stable complex. GrpE releases ADP from DnaK; ATP binding to DnaK triggers the release of the substrate protein, thus completing the reaction cycle. Several rounds of ATP-dependent interactions between DnaJ, DnaK and GrpE are required for fully efficient folding. The polypeptide is Protein GrpE (Leptothrix cholodnii (strain ATCC 51168 / LMG 8142 / SP-6) (Leptothrix discophora (strain SP-6))).